Here is a 61-residue protein sequence, read N- to C-terminus: Small ribosomal subunit protein uS14 (61 aa).

Zn(2+) is bound by residues Cys-24, Cys-27, Cys-40, and Cys-43.

This sequence belongs to the universal ribosomal protein uS14 family. Zinc-binding uS14 subfamily. Part of the 30S ribosomal subunit. Contacts proteins S3 and S10. It depends on Zn(2+) as a cofactor.

Binds 16S rRNA, required for the assembly of 30S particles and may also be responsible for determining the conformation of the 16S rRNA at the A site. The polypeptide is Small ribosomal subunit protein uS14 (Staphylococcus carnosus (strain TM300)).